Here is a 400-residue protein sequence, read N- to C-terminus: tRNA(Met) cytidine acetate ligase (400 aa).

Residues 7-20 (ITEYNPLHKGHIYH), Gly102, Asn165, and Arg190 contribute to the ATP site.

The protein belongs to the TmcAL family.

It is found in the cytoplasm. It carries out the reaction cytidine(34) in elongator tRNA(Met) + acetate + ATP = N(4)-acetylcytidine(34) in elongator tRNA(Met) + AMP + diphosphate. Its function is as follows. Catalyzes the formation of N(4)-acetylcytidine (ac(4)C) at the wobble position of elongator tRNA(Met), using acetate and ATP as substrates. First activates an acetate ion to form acetyladenylate (Ac-AMP) and then transfers the acetyl group to tRNA to form ac(4)C34. In Clostridium novyi (strain NT), this protein is tRNA(Met) cytidine acetate ligase.